The following is a 1834-amino-acid chain: Structure-specific endonuclease subunit SLX4 (1834 aa).

An interaction with SLX4IP, ERCC4/XPF and MSH2 region spans residues 1–669 (MKLSVNEAQL…QDKHPDRGGR (669 aa)). Residues 24-49 (PGIDPRSSEDQPESLKTGQMMDESDE) form a disordered region. Lysine 68 is covalently cross-linked (Glycyl lysine isopeptide (Lys-Gly) (interchain with G-Cter in SUMO2)). The interval 69–206 (EVSGERKTQK…VPSPSKPRTA (138 aa)) is disordered. The segment covering 78–87 (KAASNGTQIR) has biased composition (polar residues). The segment covering 95–104 (QTATKTKTLQ) has biased composition (low complexity). Composition is skewed to polar residues over residues 156–172 (TAQN…SPNL) and 180–204 (NVPN…SKPR). The residue at position 169 (serine 169) is a Phosphoserine. At serine 287 the chain carries Phosphoserine. A Glycyl lysine isopeptide (Lys-Gly) (interchain with G-Cter in SUMO2) cross-link involves residue lysine 291. 2 UBZ4-type zinc fingers span residues 293–323 (LFFC…DEAE) and 333–361 (IPEC…VKME). 6 residues coordinate Zn(2+): cysteine 296, cysteine 299, histidine 314, cysteine 318, cysteine 336, and cysteine 339. A Glycyl lysine isopeptide (Lys-Gly) (interchain with G-Cter in SUMO2) cross-link involves residue lysine 347. The Zn(2+) site is built by histidine 352 and cysteine 356. Lysine 359 participates in a covalent cross-link: Glycyl lysine isopeptide (Lys-Gly) (interchain with G-Cter in SUMO2). Residues 376–385 (AQPEGSSSPP) are compositionally biased toward polar residues. Disordered stretches follow at residues 376 to 417 (AQPE…DEAP), 452 to 471 (RPEA…PPLL), and 561 to 610 (QGLM…REHQ). Basic residues predominate over residues 395-411 (GLKRRGPTSKKEPRKRR). Glycyl lysine isopeptide (Lys-Gly) (interchain with G-Cter in SUMO2) cross-links involve residues lysine 412 and lysine 458. The segment covering 575–584 (EHSELSERRS) has biased composition (basic and acidic residues). Residues 684 to 1834 (MVNNPHLSDV…PRGKKKVERN (1151 aa)) form an interaction with PLK1 and TERF2-TERF2IP region. The BTB domain maps to 691 to 764 (SDVQFQTDSG…LYTADTGLPP (74 aa)). Positions 801-870 (EEKEAENCES…QRKLLQEERA (70 aa)) form a coiled coil. Disordered regions lie at residues 826 to 846 (EEEE…QENV) and 902 to 1151 (KVEE…EDEV). Residues lysine 835, lysine 902, and lysine 970 each participate in a glycyl lysine isopeptide (Lys-Gly) (interchain with G-Cter in SUMO2) cross-link. 2 stretches are compositionally biased toward basic and acidic residues: residues 902 to 916 (KVEE…RDEA) and 965 to 979 (CQAE…HSDD). The segment covering 986 to 1002 (LFSSTQGEISEPSQITS) has biased composition (polar residues). Residues 1011–1020 (VRERGLEVSH) show a composition bias toward basic and acidic residues. 3 positions are modified to phosphoserine: serine 1028, serine 1044, and serine 1070. Polar residues predominate over residues 1059-1073 (PRSRGGTSQVGSPTL). Glycyl lysine isopeptide (Lys-Gly) (interchain with G-Cter in SUMO2) cross-links involve residues lysine 1081 and lysine 1093. Residues 1094-1111 (EPGHQKGKERRSVLECRN) are compositionally biased toward basic and acidic residues. Residues lysine 1112 and lysine 1120 each participate in a glycyl lysine isopeptide (Lys-Gly) (interchain with G-Cter in SUMO2) cross-link. At serine 1121 the chain carries Phosphoserine. Over residues 1124–1133 (IDLTQSNPDH) the composition is skewed to polar residues. Serine 1135 bears the Phosphoserine mark. Glycyl lysine isopeptide (Lys-Gly) (interchain with G-Cter in SUMO2) cross-links involve residues lysine 1169, lysine 1179, and lysine 1180. The residue at position 1185 (serine 1185) is a Phosphoserine. Disordered stretches follow at residues 1195 to 1504 (IDVD…SRPS) and 1516 to 1564 (GEEQ…TPMP). Composition is skewed to polar residues over residues 1245–1254 (PSEASTTDTS) and 1269–1279 (CSSQTQISSLR). The interaction with MUS81 stretch occupies residues 1328–1648 (VSPGTSDGRR…AGVHAQQEAT (321 aa)). The segment covering 1338–1350 (QGHRSPSRPHPGG) has biased composition (basic residues). Residues 1351–1362 (HPHSSPLAPHPI) show a composition bias toward low complexity. Positions 1394 to 1403 (EVGDSDDEQE) are enriched in acidic residues. Residues 1457 to 1468 (RMNEAADSRDCR) show a composition bias toward basic and acidic residues. Phosphoserine is present on residues serine 1464 and serine 1469. Positions 1481 to 1504 (SCTTQRKLQEKSSGAGSLGNSRPS) are enriched in polar residues. Glycyl lysine isopeptide (Lys-Gly) (interchain with G-Cter in SUMO2) cross-links involve residues lysine 1575 and lysine 1576. The tract at residues 1605–1746 (TLDSDSEDES…EGEVSASQAA (142 aa)) is disordered. Serine 1610 carries the post-translational modification Phosphoserine. Positions 1632-1834 (QTYKPSRAGV…PRGKKKVERN (203 aa)) are interaction with SLX1. The segment covering 1654-1672 (HRPKGPAKTKGPRHQRKHH) has biased composition (basic residues). Lysine 1657 participates in a covalent cross-link: Glycyl lysine isopeptide (Lys-Gly) (interchain with G-Cter in SUMO2). Positions 1706–1730 (SVDGSDSSLSSQSSSSCEFGAAFES) are enriched in low complexity.

It belongs to the SLX4 family. In terms of assembly, forms a heterodimer with SLX1A/GIYD1. Interacts with ERCC4/XPF; catalytic subunit of the ERCC4-ERCC1 endonuclease. Interacts with MUS81; catalytic subunit of the MUS81-EME1 endonuclease. Interacts with MSH2; component of the MSH2-MSH3 mismatch repair complex. Interacts with TERF2-TERF2IP. Interacts with PLK1 and SLX4IP.

Its subcellular location is the nucleus. Functionally, regulatory subunit that interacts with and increases the activity of different structure-specific endonucleases. Has several distinct roles in protecting genome stability by resolving diverse forms of deleterious DNA structures originating from replication and recombination intermediates and from DNA damage. Component of the SLX1-SLX4 structure-specific endonuclease that resolves DNA secondary structures generated during DNA repair and recombination. Has endonuclease activity towards branched DNA substrates, introducing single-strand cuts in duplex DNA close to junctions with ss-DNA. Has a preference for 5'-flap structures, and promotes symmetrical cleavage of static and migrating Holliday junctions (HJs). Resolves HJs by generating two pairs of ligatable, nicked duplex products. Interacts with the structure-specific ERCC4-ERCC1 endonuclease and promotes the cleavage of bubble structures. Interacts with the structure-specific MUS81-EME1 endonuclease and promotes the cleavage of 3'-flap and replication fork-like structures. SLX4 is required for recovery from alkylation-induced DNA damage and is involved in the resolution of DNA double-strand breaks. The polypeptide is Structure-specific endonuclease subunit SLX4 (SLX4) (Homo sapiens (Human)).